The primary structure comprises 115 residues: Ribonuclease P protein component (115 aa).

It belongs to the RnpA family. In terms of assembly, consists of a catalytic RNA component (M1 or rnpB) and a protein subunit.

It catalyses the reaction Endonucleolytic cleavage of RNA, removing 5'-extranucleotides from tRNA precursor.. In terms of biological role, RNaseP catalyzes the removal of the 5'-leader sequence from pre-tRNA to produce the mature 5'-terminus. It can also cleave other RNA substrates such as 4.5S RNA. The protein component plays an auxiliary but essential role in vivo by binding to the 5'-leader sequence and broadening the substrate specificity of the ribozyme. This Macrococcus caseolyticus (strain JCSC5402) (Macrococcoides caseolyticum) protein is Ribonuclease P protein component.